The sequence spans 165 residues: Crossover junction endodeoxyribonuclease RuvC (165 aa).

Catalysis depends on residues Asp-7, Glu-68, and His-142. Positions 7, 68, and 142 each coordinate Mg(2+).

The protein belongs to the RuvC family. Homodimer which binds Holliday junction (HJ) DNA. The HJ becomes 2-fold symmetrical on binding to RuvC with unstacked arms; it has a different conformation from HJ DNA in complex with RuvA. In the full resolvosome a probable DNA-RuvA(4)-RuvB(12)-RuvC(2) complex forms which resolves the HJ. Mg(2+) serves as cofactor.

It is found in the cytoplasm. It catalyses the reaction Endonucleolytic cleavage at a junction such as a reciprocal single-stranded crossover between two homologous DNA duplexes (Holliday junction).. Functionally, the RuvA-RuvB-RuvC complex processes Holliday junction (HJ) DNA during genetic recombination and DNA repair. Endonuclease that resolves HJ intermediates. Cleaves cruciform DNA by making single-stranded nicks across the HJ at symmetrical positions within the homologous arms, yielding a 5'-phosphate and a 3'-hydroxyl group; requires a central core of homology in the junction. The consensus cleavage sequence is 5'-(A/T)TT(C/G)-3'. Cleavage occurs on the 3'-side of the TT dinucleotide at the point of strand exchange. HJ branch migration catalyzed by RuvA-RuvB allows RuvC to scan DNA until it finds its consensus sequence, where it cleaves and resolves the cruciform DNA. The sequence is that of Crossover junction endodeoxyribonuclease RuvC from Anaplasma marginale (strain St. Maries).